Consider the following 454-residue polypeptide: Probable N-octanoylanthranilate hydrolase AqdA2 (454 aa).

The active-site Acyl-ester intermediate is Ser-185. Residues Glu-306 and His-379 each act as charge relay system in the active site.

The protein belongs to the type-B carboxylesterase/lipase family.

The catalysed reaction is N-octanoylanthranilate + H2O = anthranilate + octanoate + H(+). In terms of biological role, involved in the degradation of the Pseudomonas aeruginosa quorum sensing signal molecules HHQ (2-heptyl-4-quinolone) and PQS (2-heptyl-3-hydroxy-4-quinolone) to anthranilic acid. Probably catalyzes the hydrolysis of N-octanoylanthranilic acid to anthranilic acid. This Rhodococcus erythropolis (Arthrobacter picolinophilus) protein is Probable N-octanoylanthranilate hydrolase AqdA2.